The primary structure comprises 336 residues: NAC domain-containing protein 100 (336 aa).

Residues 16 to 166 (LPPGFRFHPT…EWVICRVFQK (151 aa)) form the NAC domain. A DNA-binding region spans residues 113–172 (VGMKKTLVFYRGRAPKGQKTNWVMHEYRLEGKFSAHNLPKTAKNEWVICRVFQKSAGGKK). Residues 313 to 336 (RRFDSQEDPSSSTGPVDLEPFWNY) are disordered.

It localises to the nucleus. In terms of biological role, binds to the promoter regions of genes involved in chlorophyll catabolic processes, such as NYC1, SGR1, SGR2 and PAO. The chain is NAC domain-containing protein 100 from Arabidopsis thaliana (Mouse-ear cress).